Here is a 224-residue protein sequence, read N- to C-terminus: ATP-dependent dethiobiotin synthetase BioD (224 aa).

Mg(2+) is bound at residue Thr18. Lys39 is a catalytic residue. Ser43 lines the substrate pocket. Positions 56 and 117 each coordinate Mg(2+). Residues Asp56, 117-120 (EGVG), and 177-178 (NE) contribute to the ATP site.

This sequence belongs to the dethiobiotin synthetase family. In terms of assembly, homodimer. Mg(2+) serves as cofactor.

It localises to the cytoplasm. It carries out the reaction (7R,8S)-7,8-diammoniononanoate + CO2 + ATP = (4R,5S)-dethiobiotin + ADP + phosphate + 3 H(+). It functions in the pathway cofactor biosynthesis; biotin biosynthesis; biotin from 7,8-diaminononanoate: step 1/2. Its function is as follows. Catalyzes a mechanistically unusual reaction, the ATP-dependent insertion of CO2 between the N7 and N8 nitrogen atoms of 7,8-diaminopelargonic acid (DAPA, also called 7,8-diammoniononanoate) to form a ureido ring. The chain is ATP-dependent dethiobiotin synthetase BioD from Xanthomonas oryzae pv. oryzae (strain MAFF 311018).